Reading from the N-terminus, the 370-residue chain is Queuine tRNA-ribosyltransferase (370 aa).

The active-site Proton acceptor is the D89. Residues 89–93 (DSGGF), D143, Q187, and G214 contribute to the substrate site. An RNA binding region spans residues 245–251 (GVGKPED). D264 functions as the Nucleophile in the catalytic mechanism. The segment at 269-273 (TRNAR) is RNA binding; important for wobble base 34 recognition. Zn(2+)-binding residues include C302, C304, C307, and H333.

This sequence belongs to the queuine tRNA-ribosyltransferase family. In terms of assembly, homodimer. Within each dimer, one monomer is responsible for RNA recognition and catalysis, while the other monomer binds to the replacement base PreQ1. Requires Zn(2+) as cofactor.

The catalysed reaction is 7-aminomethyl-7-carbaguanine + guanosine(34) in tRNA = 7-aminomethyl-7-carbaguanosine(34) in tRNA + guanine. The protein operates within tRNA modification; tRNA-queuosine biosynthesis. In terms of biological role, catalyzes the base-exchange of a guanine (G) residue with the queuine precursor 7-aminomethyl-7-deazaguanine (PreQ1) at position 34 (anticodon wobble position) in tRNAs with GU(N) anticodons (tRNA-Asp, -Asn, -His and -Tyr). Catalysis occurs through a double-displacement mechanism. The nucleophile active site attacks the C1' of nucleotide 34 to detach the guanine base from the RNA, forming a covalent enzyme-RNA intermediate. The proton acceptor active site deprotonates the incoming PreQ1, allowing a nucleophilic attack on the C1' of the ribose to form the product. After dissociation, two additional enzymatic reactions on the tRNA convert PreQ1 to queuine (Q), resulting in the hypermodified nucleoside queuosine (7-(((4,5-cis-dihydroxy-2-cyclopenten-1-yl)amino)methyl)-7-deazaguanosine). The sequence is that of Queuine tRNA-ribosyltransferase from Baumannia cicadellinicola subsp. Homalodisca coagulata.